Consider the following 153-residue polypeptide: 6,7-dimethyl-8-ribityllumazine synthase (153 aa).

5-amino-6-(D-ribitylamino)uracil-binding positions include Phe22, 56-58 (AFE), and 80-82 (TVI). A (2S)-2-hydroxy-3-oxobutyl phosphate-binding site is contributed by 85–86 (ST). The active-site Proton donor is the His88. Residue Phe113 coordinates 5-amino-6-(D-ribitylamino)uracil. Arg127 serves as a coordination point for (2S)-2-hydroxy-3-oxobutyl phosphate.

It belongs to the DMRL synthase family. In terms of assembly, forms an icosahedral capsid composed of 60 subunits, arranged as a dodecamer of pentamers.

The enzyme catalyses (2S)-2-hydroxy-3-oxobutyl phosphate + 5-amino-6-(D-ribitylamino)uracil = 6,7-dimethyl-8-(1-D-ribityl)lumazine + phosphate + 2 H2O + H(+). Its pathway is cofactor biosynthesis; riboflavin biosynthesis; riboflavin from 2-hydroxy-3-oxobutyl phosphate and 5-amino-6-(D-ribitylamino)uracil: step 1/2. Catalyzes the formation of 6,7-dimethyl-8-ribityllumazine by condensation of 5-amino-6-(D-ribitylamino)uracil with 3,4-dihydroxy-2-butanone 4-phosphate. This is the penultimate step in the biosynthesis of riboflavin. The chain is 6,7-dimethyl-8-ribityllumazine synthase from Glaesserella parasuis serovar 5 (strain SH0165) (Haemophilus parasuis).